Here is a 912-residue protein sequence, read N- to C-terminus: Probable dipeptidyl-aminopeptidase B (912 aa).

The segment at 1–74 (MSSALSPEGD…GPFLGPGASL (74 aa)) is disordered. Residues 1–85 (MSSALSPEGD…REPMDRGLRR (85 aa)) are Cytoplasmic-facing. Low complexity predominate over residues 16–27 (DSLSSVSTTSLV). Residues 30-50 (RIQEKTEMDADNDKEKDPRAL) are compositionally biased toward basic and acidic residues. Residues 51–63 (DDEDPLRDEDDLE) show a composition bias toward acidic residues. Residues 86–106 (ILIIVAVVFIGGWLAGLGIFI) form a helical; Signal-anchor for type II membrane protein membrane-spanning segment. The Vacuolar segment spans residues 107–912 (ASGSYHHESD…KRHMVPQALV (806 aa)). Asn-344 is a glycosylation site (N-linked (GlcNAc...) asparagine). The active-site Charge relay system is the Ser-749. Asn-808 carries an N-linked (GlcNAc...) asparagine glycan. Residues Asp-826 and His-859 each act as charge relay system in the active site. The segment at 892 to 912 (PQPQKDPVEKEKRHMVPQALV) is disordered.

This sequence belongs to the peptidase S9B family.

It localises to the vacuole membrane. The catalysed reaction is Release of an N-terminal dipeptide, Xaa-Yaa-|-Zaa-, from a polypeptide, preferentially when Yaa is Pro, provided Zaa is neither Pro nor hydroxyproline.. In terms of biological role, type IV dipeptidyl-peptidase which removes N-terminal dipeptides sequentially from polypeptides having unsubstituted N-termini provided that the penultimate residue is proline. The chain is Probable dipeptidyl-aminopeptidase B (DAPB) from Fusarium vanettenii (strain ATCC MYA-4622 / CBS 123669 / FGSC 9596 / NRRL 45880 / 77-13-4) (Fusarium solani subsp. pisi).